We begin with the raw amino-acid sequence, 246 residues long: UPF0736 protein GWCH70_0753 (246 aa).

Belongs to the UPF0736 family.

This is UPF0736 protein GWCH70_0753 from Geobacillus sp. (strain WCH70).